The following is a 713-amino-acid chain: Oligopeptidase PhomG (713 aa).

His461 contacts Zn(2+). Glu462 is a catalytic residue. Residues His465 and His468 each coordinate Zn(2+).

The protein belongs to the peptidase M3 family. Monomer. Zn(2+) is required as a cofactor.

It functions in the pathway mycotoxin biosynthesis. Oligopeptidase; part of the gene cluster that mediates the biosynthesis of the phomopsins, a group of hexapeptide mycotoxins which infects lupins and causes lupinosis disease in livestock. Within the pathway, phomG and phomG' are probably involved in the processing of the phomA and phomA' precursors. The pathway starts with the processing of the precursor phomA by several endopeptidases including kexin proteases as well as the cluster-specific S41 family peptidase phomP1 and the oligopeptidase phomG to produce 10 identical copies of the hexapeptide Tyr-Val-Ile-Pro-Ile-Asp. After being excised from the precursor peptide, the core peptides are cyclized and modified post-translationally by enzymes encoded within the gene cluster. The timing and order of proteolysis of the phomA precursor and PTMs are still unknown. Two tyrosinase-like enzymes, phomQ1 and phomQ2, catalyze the chlorination and hydroxylation of Tyr, respectively. PhomYb, is proposed to be involved in the construction of the macrocyclic structure. The other 4 ustYa family proteins may be involved in PTMs that generate the unique structure of phomopsin A. PhomYa is required for the hydroxylation of C-beta of Tyr. PhomYc, phomYd, and phomYe are responsible for the biosynthesis of 2,3-dehydroisoleucine (dIle), 2,3-dehydroaspartic acid (dAsp), and 3,4-dehydroproline (dPro), respectively. While dIle formation by phomYc is indispensable for the installation of dAsp by phomYd, the order of the other PTMs have not been elucidated yet. Most of the biosynthetic enzymes likely have broad substrate specificity, and thus, there might be a metabolic grid from a precursor to phomopsin A. The enzyme(s) responsible for the biosynthesis of 3,4-dehydrovaline (dVal) have also not been identified yet. Finally, phomM acts as an S-adenosylmethionine-dependent alpha-N-methyltransferase that catalyzes two successive N-methylation reactions, converting N-desmethyl-phomopsin A to phomopsin A and phomopsin A further to an N,N-dimethylated congener called phomopsin E. The sequence is that of Oligopeptidase PhomG from Diaporthe leptostromiformis (Lupinosis disease fungus).